We begin with the raw amino-acid sequence, 221 residues long: Prolactin-3B1 (221 aa).

The signal sequence occupies residues 1–30 (MQLPLTPLSFSGTLLLMAMSNFLLWEHVTS). Cystine bridges form between Cys81–Cys196 and Cys213–Cys221.

This sequence belongs to the somatotropin/prolactin family.

The protein localises to the secreted. The chain is Prolactin-3B1 (PRL3B1) from Mesocricetus auratus (Golden hamster).